The following is a 537-amino-acid chain: Chaperonin GroEL (537 aa).

Residues 29-32 (TLGP), 86-90 (DGTTT), G413, and D492 contribute to the ATP site.

It belongs to the chaperonin (HSP60) family. As to quaternary structure, forms a cylinder of 14 subunits composed of two heptameric rings stacked back-to-back. Interacts with the co-chaperonin GroES.

The protein resides in the cytoplasm. It catalyses the reaction ATP + H2O + a folded polypeptide = ADP + phosphate + an unfolded polypeptide.. Functionally, together with its co-chaperonin GroES, plays an essential role in assisting protein folding. The GroEL-GroES system forms a nano-cage that allows encapsulation of the non-native substrate proteins and provides a physical environment optimized to promote and accelerate protein folding. The sequence is that of Chaperonin GroEL from Dehalococcoides mccartyi (strain ATCC BAA-2266 / KCTC 15142 / 195) (Dehalococcoides ethenogenes (strain 195)).